Reading from the N-terminus, the 256-residue chain is Acetyl-coenzyme A carboxylase carboxyl transferase subunit beta 2 (256 aa).

One can recognise a CoA carboxyltransferase N-terminal domain in the interval 1-256 (MTVKCNKCKE…LAIHAETVSA (256 aa)). 4 residues coordinate Zn(2+): cysteine 5, cysteine 8, cysteine 24, and cysteine 27. The C4-type zinc-finger motif lies at 5-27 (CNKCKEEINKEDLEKNYYICPLC).

The protein belongs to the AccD/PCCB family. As to quaternary structure, acetyl-CoA carboxylase is a heterohexamer composed of biotin carboxyl carrier protein (AccB), biotin carboxylase (AccC) and two subunits each of ACCase subunit alpha (AccA) and ACCase subunit beta (AccD). It depends on Zn(2+) as a cofactor.

It is found in the cytoplasm. The enzyme catalyses N(6)-carboxybiotinyl-L-lysyl-[protein] + acetyl-CoA = N(6)-biotinyl-L-lysyl-[protein] + malonyl-CoA. It functions in the pathway lipid metabolism; malonyl-CoA biosynthesis; malonyl-CoA from acetyl-CoA: step 1/1. Functionally, component of the acetyl coenzyme A carboxylase (ACC) complex. Biotin carboxylase (BC) catalyzes the carboxylation of biotin on its carrier protein (BCCP) and then the CO(2) group is transferred by the transcarboxylase to acetyl-CoA to form malonyl-CoA. This Lachnospira eligens (strain ATCC 27750 / DSM 3376 / VPI C15-48 / C15-B4) (Eubacterium eligens) protein is Acetyl-coenzyme A carboxylase carboxyl transferase subunit beta 2.